Here is a 1788-residue protein sequence, read N- to C-terminus: Glutamine and serine-rich protein 1 (1788 aa).

Positions 1-53 (MDAHYAPAGFAEPPAPPASAATQPAAPAWAYEARVPAAASSPSCSGSSPSLKA) are enriched in low complexity. Disordered regions lie at residues 1-69 (MDAH…DVLQ), 472-498 (TRDL…VSQT), and 532-617 (SYSS…SKQD). Composition is skewed to polar residues over residues 60-69 (PSQSESDVLQ), 478-492 (VSES…SQGL), 532-569 (SYSS…SAQP), and 576-594 (VQSS…SSIP). 2 positions are modified to phosphoserine: Ser670 and Ser940. Thr1003 bears the Phosphothreonine mark. Ser1041 is subject to Phosphoserine. Disordered stretches follow at residues 1104–1163 (QPGD…TDVY) and 1234–1264 (IQTT…VSLS). A Glycyl lysine isopeptide (Lys-Gly) (interchain with G-Cter in SUMO2) cross-link involves residue Lys1112. Positions 1126–1136 (PKEKAKGKEQG) are enriched in basic and acidic residues. A Glycyl lysine isopeptide (Lys-Gly) (interchain with G-Cter in SUMO2) cross-link involves residue Lys1137. Ser1262, Ser1281, and Ser1282 each carry phosphoserine. Thr1394 carries the phosphothreonine modification. Residue Ser1401 is modified to Phosphoserine. The segment at 1494 to 1588 (VCSKKPRNKP…DEGFEPPAPS (95 aa)) is disordered. Over residues 1510–1537 (IPSKPSSISKTSDPPVSKTTTTKTPSTK) the composition is skewed to low complexity. A compositionally biased stretch (basic and acidic residues) spans 1545–1561 (IKAEPPPKKRKKWKEEF). Positions 1562-1575 (SSSQSESSPEVRSS) are enriched in low complexity.

Interacts with TET1.

It is found in the chromosome. In terms of biological role, plays an essential role in the protection and maintenance of transcriptional and developmental programs. Protects many bivalent promoters and poised enhancers from hypermethylation, showing a marked preference for these regulatory elements over other types of promoters or enhancers. Mechanistically, cooperates with TET1 and binds to DNA in a common complex to inhibit the binding of DNMT3A/3B and therefore de novo methylation. This is Glutamine and serine-rich protein 1 from Mus musculus (Mouse).